The sequence spans 423 residues: ATP-dependent Clp protease ATP-binding subunit ClpX (423 aa).

Residues 1–50 (MTDDTEYRCSFCGKEHHQVDDLIAGPDVRICSECVVLSCEIVEDRRNEAL) enclose the ClpX-type ZB domain. Zn(2+)-binding residues include Cys9, Cys12, Cys31, and Cys34. 126–133 (PTGCGKTY) is an ATP binding site.

Belongs to the ClpX chaperone family. Component of the ClpX-ClpP complex. Forms a hexameric ring that, in the presence of ATP, binds to fourteen ClpP subunits assembled into a disk-like structure with a central cavity, resembling the structure of eukaryotic proteasomes.

Functionally, ATP-dependent specificity component of the Clp protease. It directs the protease to specific substrates. Can perform chaperone functions in the absence of ClpP. The protein is ATP-dependent Clp protease ATP-binding subunit ClpX of Tropheryma whipplei (strain Twist) (Whipple's bacillus).